The sequence spans 1645 residues: Thrombospondin type-1 domain-containing protein 7A (1645 aa).

Residues 1-38 (MGLRAGRLASPSRGVLQLLRLPLLLLLLLSSGARGAAA) form the signal peptide. At 39 to 1595 (QGDTEVPTLY…FGPDGRLKTW (1557 aa)) the chain is on the extracellular side. 3 TSP type-1 domains span residues 46–105 (TLYL…KVCD), 109–181 (ELYD…IPCQ), and 183–236 (DCIV…NPCE). Asn-223 is a glycosylation site (N-linked (GlcNAc...) asparagine). A disordered region spans residues 255 to 300 (PHTRQARQARRRGKNKEREKERGKAVKDPEARELIKKKRNRNRQNR). A coiled-coil region spans residues 256-304 (HTRQARQARRRGKNKEREKERGKAVKDPEARELIKKKRNRNRQNRQENR). Residues 258–269 (RQARQARRRGKN) show a composition bias toward basic residues. Residues 270-288 (KEREKERGKAVKDPEAREL) show a composition bias toward basic and acidic residues. Basic residues predominate over residues 289–298 (IKKKRNRNRQ). Asn-321 is a glycosylation site (N-linked (GlcNAc...) asparagine). TSP type-1 domains are found at residues 349–405 (ECQV…VSQG), 412–499 (ATYG…VPCP), 501–563 (ECEV…PSCY), 623–684 (DCVL…HPCT), 685–758 (VYHW…LPCR), 760–820 (DCVV…PTCH), 821–893 (SYRW…IPCQ), 895–948 (DCQF…CPCD), 949–1022 (KYNA…IPCP), 1024–1084 (DCKL…SDCN), 1085–1152 (QYIW…LPCP), 1154–1208 (DCVI…KNCY), 1209–1272 (HYDY…VECP), 1274–1329 (NCQL…KPCY), 1330–1400 (RWQY…QPCP), and 1402–1463 (DCYL…GQCY). Intrachain disulfides connect Cys-424–Cys-494, Cys-444–Cys-498, and Cys-455–Cys-483. N-linked (GlcNAc...) asparagine glycosylation occurs at Asn-439. Residue Asn-489 is glycosylated (N-linked (GlcNAc...) asparagine). 2 disulfides stabilise this stretch: Cys-624–Cys-666 and Cys-635–Cys-639. Asn-668 carries an N-linked (GlcNAc...) asparagine glycan. 7 cysteine pairs are disulfide-bonded: Cys-678-Cys-683, Cys-696-Cys-753, Cys-717-Cys-757, Cys-728-Cys-741, Cys-761-Cys-803, Cys-772-Cys-776, and Cys-813-Cys-819. Asn-706 is a glycosylation site (N-linked (GlcNAc...) asparagine). Asn-957 is a glycosylation site (N-linked (GlcNAc...) asparagine). Cystine bridges form between Cys-961–Cys-1017, Cys-983–Cys-1021, Cys-994–Cys-1007, Cys-1025–Cys-1062, Cys-1036–Cys-1040, and Cys-1079–Cys-1083. Asn-1032 carries N-linked (GlcNAc...) asparagine glycosylation. Cys-1201 and Cys-1207 are oxidised to a cystine. A glycan (N-linked (GlcNAc...) asparagine) is linked at Asn-1213. Cystine bridges form between Cys-1220-Cys-1267, Cys-1228-Cys-1271, Cys-1239-Cys-1252, Cys-1275-Cys-1313, Cys-1286-Cys-1290, Cys-1323-Cys-1328, Cys-1339-Cys-1395, Cys-1346-Cys-1399, Cys-1357-Cys-1376, Cys-1403-Cys-1447, Cys-1414-Cys-1418, and Cys-1457-Cys-1462. N-linked (GlcNAc...) asparagine glycosylation occurs at Asn-1264. The N-linked (GlcNAc...) asparagine glycan is linked to Asn-1354. N-linked (GlcNAc...) asparagine glycans are attached at residues Asn-1488 and Asn-1535. The helical transmembrane segment at 1596–1616 (VYGVAAGAFVLLVFIVSMIYL) threads the bilayer. The Cytoplasmic portion of the chain corresponds to 1617-1645 (ACKKPKKPQRRQNNRLKPLTLAYDGDADM).

Proteolytic cleavage in the extracellular region generates a 210 kDa soluble form. In terms of processing, extensively N-glycosylated. In terms of tissue distribution, detected on kidney podocytes along the glomerular capillary wall (at protein level).

The protein localises to the cell membrane. It is found in the cell projection. It localises to the secreted. In terms of biological role, plays a role in actin cytoskeleton rearrangement. The soluble form promotes endothelial cell migration and filopodia formation during sprouting angiogenesis via a FAK-dependent mechanism. In Mus musculus (Mouse), this protein is Thrombospondin type-1 domain-containing protein 7A (Thsd7a).